Here is an 819-residue protein sequence, read N- to C-terminus: Advillin (819 aa).

Residues M1 to D731 form a core region. A Gelsolin-like 1 repeat occupies M24–S73. Residue Y85 is modified to Phosphotyrosine. Residues K109–K116 and R135–R143 contribute to the a 1,2-diacyl-sn-glycero-3-phospho-(1D-myo-inositol-4,5-bisphosphate) site. Gelsolin-like repeat units lie at residues I145–L185, L262–Q306, E403–A454, T525–A565, and F628–K669. The segment at F628–F819 is required for interaction with F-actin. Positions A732–F819 are headpiece. Phosphotyrosine occurs at positions 748 and 758. Residues D753–F819 enclose the HP domain.

Belongs to the villin/gelsolin family. As to quaternary structure, associates (via C-terminus) with actin. Interacts with F-actin. Interacts with SCARF1; the interaction occurs in embryonic dorsal root ganglions at 18 dpc and induces neurite-like outgrowth. Interacts with PLCE1. Interacts with ACTR2 and ACTR3; associates with the ARP2/3 complex. As to expression, most highly expressed in the endometrium of the uterus, the intestinal villi and the testes. Weaker expression also detected in the brain, dorsal root ganglions and on the surface of the tongue.

It localises to the cytoplasm. Its subcellular location is the cytoskeleton. It is found in the cell projection. The protein resides in the lamellipodium. The protein localises to the cell junction. It localises to the focal adhesion. Its subcellular location is the neuron projection. It is found in the axon. Functionally, ca(2+)-regulated actin-binding protein which plays an important role in actin bundling. May have a unique function in the morphogenesis of neuronal cells which form ganglia. Required for SREC1-mediated regulation of neurite-like outgrowth. Plays a role in regenerative sensory axon outgrowth and remodeling processes after peripheral injury in neonates. Involved in the formation of long fine actin-containing filopodia-like structures in fibroblast. Plays a role in ciliogenesis. In podocytes, controls lamellipodia formation through the regulation of EGF-induced diacylglycerol generation by PLCE1 and ARP2/3 complex assembly. This Mus musculus (Mouse) protein is Advillin.